Consider the following 206-residue polypeptide: ATP phosphoribosyltransferase (206 aa).

It belongs to the ATP phosphoribosyltransferase family. Short subfamily. In terms of assembly, heteromultimer composed of HisG and HisZ subunits.

Its subcellular location is the cytoplasm. It carries out the reaction 1-(5-phospho-beta-D-ribosyl)-ATP + diphosphate = 5-phospho-alpha-D-ribose 1-diphosphate + ATP. Its pathway is amino-acid biosynthesis; L-histidine biosynthesis; L-histidine from 5-phospho-alpha-D-ribose 1-diphosphate: step 1/9. In terms of biological role, catalyzes the condensation of ATP and 5-phosphoribose 1-diphosphate to form N'-(5'-phosphoribosyl)-ATP (PR-ATP). Has a crucial role in the pathway because the rate of histidine biosynthesis seems to be controlled primarily by regulation of HisG enzymatic activity. This chain is ATP phosphoribosyltransferase, found in Thermus thermophilus (strain ATCC 27634 / DSM 579 / HB8).